A 450-amino-acid polypeptide reads, in one-letter code: Phosphoglucosamine mutase (450 aa).

The active-site Phosphoserine intermediate is the serine 102. Serine 102, aspartate 244, aspartate 246, and aspartate 248 together coordinate Mg(2+). Serine 102 is subject to Phosphoserine.

It belongs to the phosphohexose mutase family. It depends on Mg(2+) as a cofactor. Activated by phosphorylation.

The enzyme catalyses alpha-D-glucosamine 1-phosphate = D-glucosamine 6-phosphate. In terms of biological role, catalyzes the conversion of glucosamine-6-phosphate to glucosamine-1-phosphate. The polypeptide is Phosphoglucosamine mutase (Desulfovibrio desulfuricans (strain ATCC 27774 / DSM 6949 / MB)).